We begin with the raw amino-acid sequence, 250 residues long: Probable transcriptional regulatory protein Lferr_0060 (250 aa).

Belongs to the TACO1 family.

Its subcellular location is the cytoplasm. This Acidithiobacillus ferrooxidans (strain ATCC 53993 / BNL-5-31) (Leptospirillum ferrooxidans (ATCC 53993)) protein is Probable transcriptional regulatory protein Lferr_0060.